Here is a 185-residue protein sequence, read N- to C-terminus: uncharacterized protein (185 aa).

In terms of tissue distribution, component of the acid-insoluble and acid-soluble organic matrix of calcified layers of the shell (at protein level).

Its subcellular location is the secreted. This is an uncharacterized protein from Lottia gigantea (Giant owl limpet).